A 118-amino-acid chain; its full sequence is MASQSQGIQQLLQAEKRAKDKLEEAKKRKNKRLRQAKEEATADIDQYRLKREGDFRRIQTSVMGSQGNLAVKIEEQTVEKIQLYSSSFHKYKEGVLQQLLDLAYNIKPELHTNFQYKL.

The span at 1–12 (MASQSQGIQQLL) shows a compositional bias: polar residues. The disordered stretch occupies residues 1 to 37 (MASQSQGIQQLLQAEKRAKDKLEEAKKRKNKRLRQAK). Residues 3-53 (SQSQGIQQLLQAEKRAKDKLEEAKKRKNKRLRQAKEEATADIDQYRLKREG) are a coiled coil. The span at 14 to 26 (AEKRAKDKLEEAK) shows a compositional bias: basic and acidic residues.

Belongs to the V-ATPase G subunit family. V-ATPase is a heteromultimeric enzyme made up of two complexes: the ATP-hydrolytic V1 complex and the proton translocation V0 complex. The V1 complex consists of three catalytic AB heterodimers that form a heterohexamer, three peripheral stalks each consisting of EG heterodimers, one central rotor including subunits D and F, and the regulatory subunits C and H. The proton translocation complex V0 consists of the proton transport subunit a, a ring of proteolipid subunits c9c'', rotary subunit d, subunits e and f, and two accessory subunits.

Subunit of the V1 complex of vacuolar(H+)-ATPase (V-ATPase), a multisubunit enzyme composed of a peripheral complex (V1) that hydrolyzes ATP and a membrane integral complex (V0) that translocates protons. V-ATPase is responsible for acidifying and maintaining the pH of intracellular compartments and in some cell types, is targeted to the plasma membrane, where it is responsible for acidifying the extracellular environment. The protein is V-type proton ATPase subunit G 3 (atp6v1g3) of Xenopus tropicalis (Western clawed frog).